The primary structure comprises 209 residues: Type III pantothenate kinase (209 aa).

5–12 (DIGNSNAN) is a binding site for ATP. Substrate contacts are provided by residues tyrosine 68 and 72–75 (GIDR). Aspartate 74 serves as the catalytic Proton acceptor. Residue aspartate 89 participates in K(+) binding. Serine 92 lines the ATP pocket. Threonine 144 provides a ligand contact to substrate.

Belongs to the type III pantothenate kinase family. Homodimer. NH4(+) serves as cofactor. Requires K(+) as cofactor.

The protein localises to the cytoplasm. The catalysed reaction is (R)-pantothenate + ATP = (R)-4'-phosphopantothenate + ADP + H(+). The protein operates within cofactor biosynthesis; coenzyme A biosynthesis; CoA from (R)-pantothenate: step 1/5. Functionally, catalyzes the phosphorylation of pantothenate (Pan), the first step in CoA biosynthesis. The chain is Type III pantothenate kinase from Campylobacter jejuni subsp. jejuni serotype O:2 (strain ATCC 700819 / NCTC 11168).